The following is a 212-amino-acid chain: Ribonuclease HII (212 aa).

The 190-residue stretch at Thr20–Ser209 folds into the RNase H type-2 domain. Positions 26, 27, and 117 each coordinate a divalent metal cation.

This sequence belongs to the RNase HII family. Mn(2+) serves as cofactor. Requires Mg(2+) as cofactor.

Its subcellular location is the cytoplasm. The catalysed reaction is Endonucleolytic cleavage to 5'-phosphomonoester.. In terms of biological role, endonuclease that specifically degrades the RNA of RNA-DNA hybrids. In Cereibacter sphaeroides (strain ATCC 17025 / ATH 2.4.3) (Rhodobacter sphaeroides), this protein is Ribonuclease HII.